Reading from the N-terminus, the 910-residue chain is Protein translocase subunit SecA (910 aa).

ATP is bound by residues glutamine 87, 105–109, and aspartate 501; that span reads GEGKT. Residues cysteine 894, cysteine 896, cysteine 905, and histidine 906 each contribute to the Zn(2+) site.

This sequence belongs to the SecA family. Monomer and homodimer. Part of the essential Sec protein translocation apparatus which comprises SecA, SecYEG and auxiliary proteins SecDF-YajC and YidC. Requires Zn(2+) as cofactor.

It localises to the cell inner membrane. Its subcellular location is the cytoplasm. The catalysed reaction is ATP + H2O + cellular proteinSide 1 = ADP + phosphate + cellular proteinSide 2.. Part of the Sec protein translocase complex. Interacts with the SecYEG preprotein conducting channel. Has a central role in coupling the hydrolysis of ATP to the transfer of proteins into and across the cell membrane, serving both as a receptor for the preprotein-SecB complex and as an ATP-driven molecular motor driving the stepwise translocation of polypeptide chains across the membrane. This chain is Protein translocase subunit SecA, found in Acidiphilium cryptum (strain JF-5).